The chain runs to 496 residues: Ammonium transporter 1 member 2 (496 aa).

The next 11 helical transmembrane spans lie at 39-59 (LLFS…LCAG), 74-94 (VLDA…FAFG), 120-140 (FFLF…GSIA), 148-168 (YLIY…HWIW), 192-212 (FAGS…GALI), 236-256 (LVVL…PGSF), 274-296 (SAVG…TTLF), 307-327 (VIDV…GCSV), 331-351 (WAAI…NALA), 360-380 (LEAA…TALF), and 412-432 (IVVI…LFLV).

This sequence belongs to the ammonia transporter channel (TC 1.A.11.2) family. In terms of tissue distribution, expressed in exodermis, sclerenchyma, endodermis and pericycle cells of primary root tips.

It is found in the membrane. Functionally, ammonium transporter probably involved in ammonium uptake from the soil and ammonium uptake and retrieval in the vascular system. This is Ammonium transporter 1 member 2 (AMT1-2) from Oryza sativa subsp. japonica (Rice).